A 197-amino-acid chain; its full sequence is Recombination protein RecR (197 aa).

The C4-type zinc-finger motif lies at 56–71; the sequence is CSRCFNLSAEDPCDIC. One can recognise a Toprim domain in the interval 79–174; it reads ETICVVAEPR…RVTRIAFGLP (96 aa).

This sequence belongs to the RecR family.

In terms of biological role, may play a role in DNA repair. It seems to be involved in an RecBC-independent recombinational process of DNA repair. It may act with RecF and RecO. The sequence is that of Recombination protein RecR from Gloeobacter violaceus (strain ATCC 29082 / PCC 7421).